The primary structure comprises 227 residues: Ribonuclease 3 (227 aa).

An RNase III domain is found at 4–133 (FEELEKLLDY…LIAAIYLDSD (130 aa)). Glutamate 46 is a Mg(2+) binding site. Aspartate 50 is a catalytic residue. Positions 119 and 122 each coordinate Mg(2+). Glutamate 122 is a catalytic residue. The DRBM domain maps to 158–226 (DPKTALQEWA…ARELLHKLKL (69 aa)).

The protein belongs to the ribonuclease III family. As to quaternary structure, homodimer. Mg(2+) serves as cofactor.

It localises to the cytoplasm. The enzyme catalyses Endonucleolytic cleavage to 5'-phosphomonoester.. In terms of biological role, digests double-stranded RNA. Involved in the processing of primary rRNA transcript to yield the immediate precursors to the large and small rRNAs (23S and 16S). Processes some mRNAs, and tRNAs when they are encoded in the rRNA operon. Processes pre-crRNA and tracrRNA of type II CRISPR loci if present in the organism. This Rickettsia bellii (strain OSU 85-389) protein is Ribonuclease 3.